We begin with the raw amino-acid sequence, 121 residues long: Large ribosomal subunit protein bL21 (121 aa).

The protein belongs to the bacterial ribosomal protein bL21 family. As to quaternary structure, part of the 50S ribosomal subunit. Contacts protein L20.

Functionally, this protein binds to 23S rRNA in the presence of protein L20. This is Large ribosomal subunit protein bL21 from Gloeobacter violaceus (strain ATCC 29082 / PCC 7421).